The chain runs to 26 residues: AMP deaminase 1 (26 aa).

It belongs to the metallo-dependent hydrolases superfamily. Adenosine and AMP deaminases family. In terms of assembly, homotetramer.

It carries out the reaction AMP + H2O + H(+) = IMP + NH4(+). The protein operates within purine metabolism; IMP biosynthesis via salvage pathway; IMP from AMP: step 1/1. AMP deaminase plays a critical role in energy metabolism. This chain is AMP deaminase 1 (AMPD1), found in Gallus gallus (Chicken).